We begin with the raw amino-acid sequence, 300 residues long: Iron-dependent extradiol dioxygenase (300 aa).

VOC domains lie at 5–120 (SLGY…VFHG) and 142–270 (GMGH…FGCE). His145 serves as a coordination point for Fe cation. Residues His200, His215, Asp250, and Tyr256 each contribute to the substrate site. Residue His215 coordinates Fe cation. Residue Glu266 participates in Fe cation binding.

The protein belongs to the extradiol ring-cleavage dioxygenase family. As to quaternary structure, homodimer, but may form a homooctamer. It depends on Fe(2+) as a cofactor.

The enzyme catalyses 3,4-dihydroxy-9,10-secoandrosta-1,3,5(10)-triene-9,17-dione + O2 = (1E,2Z)-3-hydroxy-5,9,17-trioxo-4,5:9,10-disecoandrosta-1(10),2-dien-4-oate + H(+). It functions in the pathway steroid metabolism; cholesterol metabolism. In terms of biological role, catalyzes the meta-cleavage of 3,4-dihydroxy-9,10-seconandrost-1,3,5(10)-triene-9,17-dione (3,4-DHSA) to produce 4,5-9,10-diseco-3-hydroxy-5,9,17-trioxoandrosta-1(10),2-diene-4-oic acid (4,9-DSHA). The polypeptide is Iron-dependent extradiol dioxygenase (hsaC) (Mycobacterium tuberculosis (strain CDC 1551 / Oshkosh)).